The sequence spans 285 residues: Probable endonuclease 4 (285 aa).

His69, His109, Glu145, Asp179, His182, His216, Asp229, His231, and Glu261 together coordinate Zn(2+).

It belongs to the AP endonuclease 2 family. Zn(2+) serves as cofactor.

The catalysed reaction is Endonucleolytic cleavage to 5'-phosphooligonucleotide end-products.. Its function is as follows. Endonuclease IV plays a role in DNA repair. It cleaves phosphodiester bonds at apurinic or apyrimidinic (AP) sites, generating a 3'-hydroxyl group and a 5'-terminal sugar phosphate. The chain is Probable endonuclease 4 from Salmonella paratyphi C (strain RKS4594).